A 159-amino-acid chain; its full sequence is Cytochrome c-type biogenesis protein CcmE (159 aa).

At 1–23 the chain is on the cytoplasmic side; that stretch reads MNNSSLENSASLKVILKQRKKKR. A helical; Signal-anchor for type II membrane protein transmembrane segment spans residues 24–44; that stretch reads LLIILLCCLVMAIAASLVVYA. At 45-159 the chain is on the periplasmic side; the sequence is MRHAVSFFRM…RLKKHYSVEK (115 aa). Heme is bound by residues His-138 and Tyr-142.

It belongs to the CcmE/CycJ family.

Its subcellular location is the cell inner membrane. In terms of biological role, heme chaperone required for the biogenesis of c-type cytochromes. Transiently binds heme delivered by CcmC and transfers the heme to apo-cytochromes in a process facilitated by CcmF and CcmH. The sequence is that of Cytochrome c-type biogenesis protein CcmE from Bartonella tribocorum (strain CIP 105476 / IBS 506).